The following is a 286-amino-acid chain: MKIVSTKTELEAVLAPWRAADDSIAFVPTMGNLHAGHLHLVDTAKTKARRVVVSIFVNPTQFGPDEDLAAYPRTPEQDIERLRAHQADLLYLPDAADVYPDDGQPATFVEVPGLSEQLCGKFRPGHFRGVATVVCKLLNRVRPDLALFGEKDFQQLTVIRKMVRDLDMAVTIMGVPTVREPSGLAMSSRNAYLSPEQKERASLIFRTLNQAAEAVRAGERDYARIEQEASATLEAGGFSVDYVSIRRQQDLAAPSADDSALVILAAAHLGRARLIDNVLISLDTTR.

ATP is bound at residue 30 to 37; it reads MGNLHAGH. His37 functions as the Proton donor in the catalytic mechanism. Gln61 provides a ligand contact to (R)-pantoate. Gln61 contacts beta-alanine. 149–152 is an ATP binding site; that stretch reads GEKD. Gln155 provides a ligand contact to (R)-pantoate. ATP contacts are provided by residues Val178 and 186-189; that span reads MSSR.

It belongs to the pantothenate synthetase family. Homodimer.

The protein localises to the cytoplasm. It catalyses the reaction (R)-pantoate + beta-alanine + ATP = (R)-pantothenate + AMP + diphosphate + H(+). It functions in the pathway cofactor biosynthesis; (R)-pantothenate biosynthesis; (R)-pantothenate from (R)-pantoate and beta-alanine: step 1/1. Catalyzes the condensation of pantoate with beta-alanine in an ATP-dependent reaction via a pantoyl-adenylate intermediate. The protein is Pantothenate synthetase of Methylococcus capsulatus (strain ATCC 33009 / NCIMB 11132 / Bath).